A 309-amino-acid polypeptide reads, in one-letter code: Ribosomal RNA small subunit methyltransferase H (309 aa).

S-adenosyl-L-methionine-binding positions include 36–38 (GGH), aspartate 56, phenylalanine 82, aspartate 103, and glutamine 110.

It belongs to the methyltransferase superfamily. RsmH family.

Its subcellular location is the cytoplasm. It catalyses the reaction cytidine(1402) in 16S rRNA + S-adenosyl-L-methionine = N(4)-methylcytidine(1402) in 16S rRNA + S-adenosyl-L-homocysteine + H(+). Specifically methylates the N4 position of cytidine in position 1402 (C1402) of 16S rRNA. The polypeptide is Ribosomal RNA small subunit methyltransferase H (Hahella chejuensis (strain KCTC 2396)).